The chain runs to 316 residues: 4-hydroxy-3-methylbut-2-enyl diphosphate reductase (316 aa).

Cys-18 serves as a coordination point for [4Fe-4S] cluster. Residues His-47 and His-80 each contribute to the (2E)-4-hydroxy-3-methylbut-2-enyl diphosphate site. Dimethylallyl diphosphate is bound by residues His-47 and His-80. Isopentenyl diphosphate is bound by residues His-47 and His-80. Cys-102 contacts [4Fe-4S] cluster. Position 130 (His-130) interacts with (2E)-4-hydroxy-3-methylbut-2-enyl diphosphate. His-130 contributes to the dimethylallyl diphosphate binding site. His-130 provides a ligand contact to isopentenyl diphosphate. The active-site Proton donor is the Glu-132. Thr-171 provides a ligand contact to (2E)-4-hydroxy-3-methylbut-2-enyl diphosphate. [4Fe-4S] cluster is bound at residue Cys-201. Residues Ser-229, Ser-230, Asn-231, and Ser-274 each contribute to the (2E)-4-hydroxy-3-methylbut-2-enyl diphosphate site. Dimethylallyl diphosphate contacts are provided by Ser-229, Ser-230, Asn-231, and Ser-274. Residues Ser-229, Ser-230, Asn-231, and Ser-274 each coordinate isopentenyl diphosphate.

This sequence belongs to the IspH family. The cofactor is [4Fe-4S] cluster.

The enzyme catalyses isopentenyl diphosphate + 2 oxidized [2Fe-2S]-[ferredoxin] + H2O = (2E)-4-hydroxy-3-methylbut-2-enyl diphosphate + 2 reduced [2Fe-2S]-[ferredoxin] + 2 H(+). It catalyses the reaction dimethylallyl diphosphate + 2 oxidized [2Fe-2S]-[ferredoxin] + H2O = (2E)-4-hydroxy-3-methylbut-2-enyl diphosphate + 2 reduced [2Fe-2S]-[ferredoxin] + 2 H(+). The protein operates within isoprenoid biosynthesis; dimethylallyl diphosphate biosynthesis; dimethylallyl diphosphate from (2E)-4-hydroxy-3-methylbutenyl diphosphate: step 1/1. It functions in the pathway isoprenoid biosynthesis; isopentenyl diphosphate biosynthesis via DXP pathway; isopentenyl diphosphate from 1-deoxy-D-xylulose 5-phosphate: step 6/6. Its function is as follows. Catalyzes the conversion of 1-hydroxy-2-methyl-2-(E)-butenyl 4-diphosphate (HMBPP) into a mixture of isopentenyl diphosphate (IPP) and dimethylallyl diphosphate (DMAPP). Acts in the terminal step of the DOXP/MEP pathway for isoprenoid precursor biosynthesis. The sequence is that of 4-hydroxy-3-methylbut-2-enyl diphosphate reductase from Paracoccus denitrificans (strain Pd 1222).